A 256-amino-acid chain; its full sequence is Hydroxyacylglutathione hydrolase (256 aa).

Zn(2+) contacts are provided by H54, H56, D58, H59, H113, D136, and H174.

Belongs to the metallo-beta-lactamase superfamily. Glyoxalase II family. Monomer. The cofactor is Zn(2+).

The catalysed reaction is an S-(2-hydroxyacyl)glutathione + H2O = a 2-hydroxy carboxylate + glutathione + H(+). The protein operates within secondary metabolite metabolism; methylglyoxal degradation; (R)-lactate from methylglyoxal: step 2/2. Functionally, thiolesterase that catalyzes the hydrolysis of S-D-lactoyl-glutathione to form glutathione and D-lactic acid. The polypeptide is Hydroxyacylglutathione hydrolase (Cyanothece sp. (strain PCC 7425 / ATCC 29141)).